Consider the following 177-residue polypeptide: Transcription antitermination protein NusB (177 aa).

Residues 1–36 (MTEQPTKPTGSRPPRQPRTGLTSTGARKAGSKSDRS) form a disordered region.

It belongs to the NusB family.

Involved in transcription antitermination. Required for transcription of ribosomal RNA (rRNA) genes. Binds specifically to the boxA antiterminator sequence of the ribosomal RNA (rrn) operons. This chain is Transcription antitermination protein NusB, found in Albidiferax ferrireducens (strain ATCC BAA-621 / DSM 15236 / T118) (Rhodoferax ferrireducens).